We begin with the raw amino-acid sequence, 479 residues long: Neuronal acetylcholine receptor subunit alpha-9 (479 aa).

The first 25 residues, 1-25 (MNRPHSCLSFCWMYFAASGIRAVET), serve as a signal peptide directing secretion. Residues 26–237 (ANGKYAQKLF…TFTLLLKRRS (212 aa)) lie on the Extracellular side of the membrane. Residue Asn57 is glycosylated (N-linked (GlcNAc...) asparagine). Cys155 and Cys169 are disulfide-bonded. Asn170 carries N-linked (GlcNAc...) asparagine glycosylation. Positions 191 and 193 each coordinate Na(+). Cys219 and Cys220 are disulfide-bonded. 3 helical membrane-spanning segments follow: residues 238 to 262 (SFYI…FYLP), 269 to 287 (VSLG…LMVA), and 302 to 323 (YYIA…VMNI). Topologically, residues 324–457 (HFCGAEARPV…WKKVAKVIDR (134 aa)) are cytoplasmic. The helical transmembrane segment at 458-476 (FFMWIFFAMVFVMTVLIIA) threads the bilayer.

The protein belongs to the ligand-gated ion channel (TC 1.A.9) family. Acetylcholine receptor (TC 1.A.9.1) subfamily. Alpha-9/CHRNA9 sub-subfamily. In terms of assembly, forms homo- or heterooligomeric channels in conjunction with CHRNA10. The native outer hair cell receptor may be composed of CHRNA9:CHRNA10 heterooligomers. Found in the stoichiometric form (CHRNA9)2:(CHRNA10)3. As to expression, detected in the nasal epithelium, in the outer hair cells of the cochlea, in the pars tuberalis of the hypophysis, and in the developing muscle of the tongue. Also expressed in the neurons of dorsal root ganglia.

It localises to the synaptic cell membrane. Its subcellular location is the cell membrane. The enzyme catalyses Ca(2+)(in) = Ca(2+)(out). It catalyses the reaction Mg(2+)(in) = Mg(2+)(out). It carries out the reaction K(+)(in) = K(+)(out). The catalysed reaction is Na(+)(in) = Na(+)(out). With respect to regulation, activated by a myriad of ligands such as acetylcholine. AChR activity is inhibited by the antagonist alpha-conotoxins RgIA and GeXXA, small disulfide-constrained peptides from cone snails. In terms of biological role, component of neuronal acetylcholine receptors (nAChRs) that function as pentameric, ligand-gated cation channels with high calcium permeability among other activities. nAChRs are excitatory neurotrasnmitter receptors formed by a collection of nAChR subunits known to mediate synaptic transmission in the nervous system and the neuromuscular junction. Each nAchR subunit confers differential attributes to channel properties, including activation, deactivation and desensitization kinetics, pH sensitivity, cation permeability, and binding to allosteric modulators. Forms either homopentamers or heteropentamers with CHRNA10. Expressed in the inner ear, in sympathetic neurons and in other non-neuronal cells, such as skin keratinocytes and lymphocytes. nAChR formed by CHRNA9:CHRNA10 mediate central nervous system control of auditory and vestibular sensory processing. The channel is permeable to a range of divalent cations including calcium, the influx of which may activate a potassium current which hyperpolarizes the cell membrane. In the ear, mediates synaptic transmission between efferent olivocochlear fibers and hair cells of the cochlea, this may lead to a reduction in basilar membrane motion, altering the activity of auditory nerve fibers and reducing the range of dynamic hearing. This may protect against acoustic trauma. May also regulate keratinocyte adhesion. In Rattus norvegicus (Rat), this protein is Neuronal acetylcholine receptor subunit alpha-9 (Chrna9).